Reading from the N-terminus, the 810-residue chain is MPNKNDNKGKYSRLEKEAKKAREEKISIPNVLPAIAMRSNMVIFPNTVVPFYVGREISLMALEEAMEKTNQIVFVVNQKDPAVETPTEKDLYKVGTIVRIIQVGKLPDETFKVLVEGIARAKWIKNVGEKFFKFEIEILRTRYGKSKRLIALMRMVKEELHKYVQYSRKIPPETLMLLEDVDNPDVFADIAASLCPGNIEEKQQLLEIVHPANRLERILDILARETELLEIEQQLDQKVKERIEKSQREYYLREKLRVIRDELGGEEDIEIKELKEKIENNNYPEFVKEKARAEINRLEKMSPYAPEATVVRTYLDWILNLPWHEKTDDTDDINFAEKVLNEDHYGLDEPKRRILEYLATRKVSQKAKAPIICFVGPPGVGKTSLAKSIARAMNRKFGRMSLGGLRDEAEIRGHRRTYVGAMPGRIMQLIRKLGVKNPVILLDEIDKMGISFQGDPASALLEVLDPEQNKEFVDHYIELPYDLSEVLFVTTANVLYTIPPALRDRMEVIEISSYTDVEKFYIAKNYIIPKIESEFVEKADEIFSFKDTAIKKIINEYTLEPGVRELEREIRSVVRKATLDAIKTGKKIVISPEKVTEYLGPSKIKDEDKLEKPMIGVTTGLAWTPNGGTTLYIESTLIPGNGGLIITGQLGDVMKESVRIALSLARKIVGDEYAEKFTKNDIHVHVPEGAVPKDGPSAGVTITTALVSVVKNIPVRNDIAMTGEITLRGRVLPVGGIKEKVMAAYRKGIYHVILPKKNEVDIEKVPEVVRTKMKFTFVETIEEVLEVALNEDNSKESRKGRTRKGNSNTK.

Residues 32–226 form the Lon N-terminal domain; it reads LPAIAMRSNM…RILDILARET (195 aa). 376-383 provides a ligand contact to ATP; sequence GPPGVGKT. The region spanning 612–791 is the Lon proteolytic domain; that stretch reads KPMIGVTTGL…EEVLEVALNE (180 aa). Residues Ser697 and Lys740 contribute to the active site.

Belongs to the peptidase S16 family. As to quaternary structure, homohexamer. Organized in a ring with a central cavity.

It localises to the cytoplasm. The enzyme catalyses Hydrolysis of proteins in presence of ATP.. Functionally, ATP-dependent serine protease that mediates the selective degradation of mutant and abnormal proteins as well as certain short-lived regulatory proteins. Required for cellular homeostasis and for survival from DNA damage and developmental changes induced by stress. Degrades polypeptides processively to yield small peptide fragments that are 5 to 10 amino acids long. Binds to DNA in a double-stranded, site-specific manner. This is Lon protease from Fervidobacterium nodosum (strain ATCC 35602 / DSM 5306 / Rt17-B1).